Here is a 415-residue protein sequence, read N- to C-terminus: Sucrose permease (415 aa).

Topologically, residues 1 to 16 (MALNIPFRNAYYRFAS) are cytoplasmic. The helical transmembrane segment at 17–37 (SYSFLFFISWSLWWSLYAIWL) threads the bilayer. Topologically, residues 38 to 48 (KGHLGLTGTEL) are periplasmic. The chain crosses the membrane as a helical span at residues 49 to 69 (GTLYSVNQFTSILFMMFYGIV). Topologically, residues 70 to 77 (QDKLGLKK) are cytoplasmic. The chain crosses the membrane as a helical span at residues 78 to 98 (PLIWCMSFILVLTGPFMIYVY). The Periplasmic segment spans residues 99-107 (EPLLQSNFS). A helical membrane pass occupies residues 108-128 (VGLILGALFFGLGYLAGCGLL). Over 129-147 (DSFTEKMARNFHFEYGTAR) the chain is Cytoplasmic. The helical transmembrane segment at 148–167 (AWGSFGYAIGAFFAGIFFSI) threads the bilayer. Over 168–170 (SPH) the chain is Periplasmic. A helical transmembrane segment spans residues 171–190 (INFWLVSLFGAVFMMINMRF). Over 191-220 (KDKDHQCIAADAGGVKKEDFIAVFKDRNFW) the chain is Cytoplasmic. Residues 221-241 (VFVIFIVGTWSFYNIFDQQLF) form a helical membrane-spanning segment. Residues 242–260 (PVFYAGLFESHDVGTRLYG) lie on the Periplasmic side of the membrane. A helical membrane pass occupies residues 261–281 (YLNSFQVVLEALCMAIIPFFV). Over 282 to 287 (NRVGPK) the chain is Cytoplasmic. The helical transmembrane segment at 288–308 (NALLIGVVIMALRILSCALFV) threads the bilayer. Topologically, residues 309–311 (NPW) are periplasmic. A helical transmembrane segment spans residues 312–332 (IISLVKLLHAIEVPLCVISVF). The Cytoplasmic portion of the chain corresponds to 333 to 342 (KYSVANFDKR). A helical membrane pass occupies residues 343-363 (LSSTIFLIGFQIASSLGIVLL). The Periplasmic portion of the chain corresponds to 364–377 (STPTGILFDHAGYQ). A helical membrane pass occupies residues 378-398 (TVFFAISGIVCLMLLFGIFFL). Over 399–415 (SKKREQIVMETPVPSAI) the chain is Cytoplasmic.

It belongs to the major facilitator superfamily. Oligosaccharide:H(+) symporter (OHS) (TC 2.A.1.5) family.

It is found in the cell inner membrane. It functions in the pathway glycan biosynthesis; sucrose metabolism. In terms of biological role, responsible for transport of sucrose into the cell, with the concomitant import of a proton (symport system). Can also transport maltose, fructose or lactulose, but not glucose, lactose or melibiose. The substrate specificity is directed toward the fructofuranosyl moiety of the substrate. The sequence is that of Sucrose permease from Escherichia coli.